Here is a 294-residue protein sequence, read N- to C-terminus: Pyridoxal 5'-phosphate synthase subunit PdxS (294 aa).

Position 24 (Asp24) interacts with D-ribose 5-phosphate. The Schiff-base intermediate with D-ribose 5-phosphate role is filled by Lys81. Gly153 provides a ligand contact to D-ribose 5-phosphate. Arg165 contacts D-glyceraldehyde 3-phosphate. Residues Gly214 and Gly235 to Ser236 each bind D-ribose 5-phosphate.

It belongs to the PdxS/SNZ family. In the presence of PdxT, forms a dodecamer of heterodimers.

It carries out the reaction aldehydo-D-ribose 5-phosphate + D-glyceraldehyde 3-phosphate + L-glutamine = pyridoxal 5'-phosphate + L-glutamate + phosphate + 3 H2O + H(+). It functions in the pathway cofactor biosynthesis; pyridoxal 5'-phosphate biosynthesis. Catalyzes the formation of pyridoxal 5'-phosphate from ribose 5-phosphate (RBP), glyceraldehyde 3-phosphate (G3P) and ammonia. The ammonia is provided by the PdxT subunit. Can also use ribulose 5-phosphate and dihydroxyacetone phosphate as substrates, resulting from enzyme-catalyzed isomerization of RBP and G3P, respectively. This chain is Pyridoxal 5'-phosphate synthase subunit PdxS, found in Bacillus velezensis (strain DSM 23117 / BGSC 10A6 / LMG 26770 / FZB42) (Bacillus amyloliquefaciens subsp. plantarum).